Here is a 379-residue protein sequence, read N- to C-terminus: MSTTGQIIRCKAAVAWEAGKPLVIEEVEVAPPQKHEVRIKILFTSLCHTDVYFWEAKGQTPLFPRIFGHEAGGIVESVGEGVTDLQPGDHVLPIFTGECGECRHCHSEESNMCDLLRINTERGGMIHDGESRFSINGKPIYHFLGTSTFSEYTVVHSGQVAKINPDAPLDKVCIVSCGLSTGLGATLNVAKPKKGQSVAIFGLGAVGLGAAEGARIAGASRIIGVDFNSKRFDQAKEFGVTECVNPKDHDKPIQQVIAEMTDGGVDRSVECTGSVQAMIQAFECVHDGWGVAVLVGVPSKDDAFKTHPMNFLNERTLKGTFFGNYKPKTDIPGVVEKYMNKELELEKFITHTVPFSEINKAFDYMLKGESIRCIITMGA.

Ser2 is subject to N-acetylserine. Cys47 lines the Zn(2+) pocket. Residue Thr49 coordinates an alcohol. Thr49 is a binding site for NAD(+). Positions 50, 69, 70, 99, 102, 105, 113, and 177 each coordinate Zn(2+). Residue His69 coordinates an alcohol. NAD(+)-binding residues include Val206 and Asp226. Ser229 is modified (phosphoserine). 7 residues coordinate NAD(+): Arg231, Thr272, Val295, Val297, Thr320, Phe322, and Arg372.

It belongs to the zinc-containing alcohol dehydrogenase family. Class-P subfamily. As to quaternary structure, homodimer. The cofactor is Zn(2+). In terms of processing, glutathionylated. As to expression, root specific. Also detected in etiolated seedlings and leaves in cold conditions.

It is found in the cytoplasm. It carries out the reaction a primary alcohol + NAD(+) = an aldehyde + NADH + H(+). The catalysed reaction is a secondary alcohol + NAD(+) = a ketone + NADH + H(+). It catalyses the reaction ethanol + NAD(+) = acetaldehyde + NADH + H(+). Its activity is regulated as follows. Alcohol dehydrogenase activity show inverse correlation with the decreasing availability of oxygen. Slightly repressed by thiol-modifying agents N-ethylmaleimide (NEM) and 5,5-dithio-bis-(2-nitrobenzoic acid) (DTNB), as well as by methyl methanethiosulfonate (MMTS) in a dose-dependent manner. Inhibited by hydrogen peroxide H(2)O(2). In terms of biological role, alcohol dehydrogenase catalyzing the reduction of toxic aldehydes to the corresponding alcohols. Mostly active on ethanol (EtOH), but exhibits broad substrate selectivity for primary and secondary alcohols (e.g. cinnamyl alcohol, octanol, geraniol, butanol, propyl alcohol, pentanol, isopentanol, ethylene glycol, isopropanol, methanol and tertiary butyl alcohol). Also catalyzes the reverse reaction to convert allyl alcohol to highly toxic acryl-aldehyde. Required for survival and acclimation in hypoxic conditions, especially in roots. Not able to catalyze NADH-dependent degradation of S-nitrosoglutathione (GSNO). This chain is Alcohol dehydrogenase class-P, found in Arabidopsis thaliana (Mouse-ear cress).